The primary structure comprises 418 residues: Pestheic acid cluster transcriptional regulator 1 (418 aa).

Residues 244–272 are disordered; that stretch reads GTAVTTTATTSSSFISKSSEEPSPKRIKP. A compositionally biased stretch (low complexity) spans 245 to 260; sequence TAVTTTATTSSSFISK.

The protein resides in the nucleus. Functionally, transcription factor that, with ptaR2 and ptaR3, coregulates the expression of the gene cluster that mediates the biosynthesis of pestheic acid, a diphenyl ether which is a biosynthetic precursor of the unique chloropupukeananes. This chain is Pestheic acid cluster transcriptional regulator 1, found in Pestalotiopsis fici (strain W106-1 / CGMCC3.15140).